The following is a 267-amino-acid chain: uncharacterized protein (267 aa).

It to S.pombe SpAC18G6.12c.

This is an uncharacterized protein from Schizosaccharomyces pombe (strain 972 / ATCC 24843) (Fission yeast).